The sequence spans 161 residues: Bifurcating [FeFe] hydrogenase gamma subunit (161 aa).

[2Fe-2S] cluster-binding residues include Cys78, Cys83, Cys119, and Cys123.

The protein belongs to the complex I 24 kDa subunit family. Heterotrimer composed of HydA (alpha subunit), HydB (beta subunit) and HydC (gamma subunit). Near neutral and acidic pH conditions favor oligomerization of the heterotrimeric holoenzyme. The cofactor is [2Fe-2S] cluster.

It localises to the cytoplasm. It catalyses the reaction 2 H2 + 2 oxidized [2Fe-2S]-[ferredoxin] + NAD(+) = 2 reduced [2Fe-2S]-[ferredoxin] + NADH + 3 H(+). Its function is as follows. Catalyzes the oxidation of the physiological electron carriers NADH and reduced ferredoxin, coupled to the production of H(2). Acts as a bifurcating [FeFe] hydrogenase, which uses the exergonic oxidation of reduced ferredoxin to drive the unfavorable oxidation of NADH to produce H(2). The gamma subunit might be the site where reduced ferredoxin is oxidized. This chain is Bifurcating [FeFe] hydrogenase gamma subunit, found in Thermotoga maritima (strain ATCC 43589 / DSM 3109 / JCM 10099 / NBRC 100826 / MSB8).